The sequence spans 297 residues: Formylmethanofuran--tetrahydromethanopterin formyltransferase (297 aa).

It belongs to the FTR family. Homotetramer.

Its subcellular location is the cytoplasm. It carries out the reaction N-formylmethanofuran + 5,6,7,8-tetrahydromethanopterin + H(+) = N(5)-formyl-5,6,7,8-tetrahydromethanopterin + methanofuran. It participates in one-carbon metabolism; methanogenesis from CO(2); 5,10-methenyl-5,6,7,8-tetrahydromethanopterin from CO(2): step 2/3. Its function is as follows. Catalyzes the reversible transfer of a formyl group from formylmethanofuran (formyl-MFR) to tetrahydromethanopterin (H(4)MPT) to produce 5-formyl tetrahydromethanopterin (5-formyl-H(4)MPT) and methanofuran (MFR). This is Formylmethanofuran--tetrahydromethanopterin formyltransferase from Methanococcoides burtonii (strain DSM 6242 / NBRC 107633 / OCM 468 / ACE-M).